The sequence spans 1513 residues: DNA-directed RNA polymerase subunit beta'' (1513 aa).

Zn(2+)-binding residues include cysteine 220, cysteine 296, cysteine 303, and cysteine 306. The segment at 644-769 is disordered; sequence RTREKDSENE…EYGNPEEDSV (126 aa). The span at 659-679 shows a compositional bias: basic and acidic residues; it reads NEYRTREEECKTLEDEYRTRE. A compositionally biased stretch (acidic residues) spans 680 to 707; sequence EEYETLEDEYGIPENEYETLEDEYGILE. Residues 726–737 are compositionally biased toward basic and acidic residues; that stretch reads NKYRPREDKYGT. The span at 738-767 shows a compositional bias: acidic residues; that stretch reads LEEDSEDEHGTLEEDSEEDSEDEYGNPEED.

The protein belongs to the RNA polymerase beta' chain family. RpoC2 subfamily. As to quaternary structure, in plastids the minimal PEP RNA polymerase catalytic core is composed of four subunits: alpha, beta, beta', and beta''. When a (nuclear-encoded) sigma factor is associated with the core the holoenzyme is formed, which can initiate transcription. The cofactor is Zn(2+).

The protein localises to the plastid. Its subcellular location is the chloroplast. It catalyses the reaction RNA(n) + a ribonucleoside 5'-triphosphate = RNA(n+1) + diphosphate. In terms of biological role, DNA-dependent RNA polymerase catalyzes the transcription of DNA into RNA using the four ribonucleoside triphosphates as substrates. This is DNA-directed RNA polymerase subunit beta'' from Oryza sativa (Rice).